The primary structure comprises 163 residues: ATP synthase subunit b 1 (163 aa).

A helical membrane pass occupies residues 7 to 27 (AETWVAIAFVILLGVFAYLGV).

The protein belongs to the ATPase B chain family. As to quaternary structure, F-type ATPases have 2 components, F(1) - the catalytic core - and F(0) - the membrane proton channel. F(1) has five subunits: alpha(3), beta(3), gamma(1), delta(1), epsilon(1). F(0) has three main subunits: a(1), b(2) and c(10-14). The alpha and beta chains form an alternating ring which encloses part of the gamma chain. F(1) is attached to F(0) by a central stalk formed by the gamma and epsilon chains, while a peripheral stalk is formed by the delta and b chains.

The protein localises to the cell inner membrane. In terms of biological role, f(1)F(0) ATP synthase produces ATP from ADP in the presence of a proton or sodium gradient. F-type ATPases consist of two structural domains, F(1) containing the extramembraneous catalytic core and F(0) containing the membrane proton channel, linked together by a central stalk and a peripheral stalk. During catalysis, ATP synthesis in the catalytic domain of F(1) is coupled via a rotary mechanism of the central stalk subunits to proton translocation. Its function is as follows. Component of the F(0) channel, it forms part of the peripheral stalk, linking F(1) to F(0). This is ATP synthase subunit b 1 from Rhodopseudomonas palustris (strain ATCC BAA-98 / CGA009).